Consider the following 285-residue polypeptide: Sulfoquinovosyl glycerol transport system permease protein SmoH (285 aa).

6 helical membrane-spanning segments follow: residues 21-41, 83-103, 115-135, 150-170, 195-215, and 250-270; these read FIAA…ILFT, FMVA…AAYA, ILSL…VPLF, LILP…VSFF, VVVP…FVNA, and PVIS…IVIF. The ABC transmembrane type-1 domain occupies 79–270; sequence LFNSFMVALL…VPVAILIVIF (192 aa).

The protein belongs to the binding-protein-dependent transport system permease family. The complex is probably composed of two ATP-binding proteins (SmoE), two transmembrane proteins (SmoG and SmoH) and a solute-binding protein (SmoF).

It localises to the cell inner membrane. Its function is as follows. Part of the ABC transporter complex SmoEFGH involved in sulfoquinovosyl glycerol (SQGro) uptake. Responsible for the translocation of the substrate across the membrane. This Agrobacterium fabrum (strain C58 / ATCC 33970) (Agrobacterium tumefaciens (strain C58)) protein is Sulfoquinovosyl glycerol transport system permease protein SmoH.